The sequence spans 1568 residues: Myosin-2 (1568 aa).

Residues Glu4–Asn57 enclose the Myosin N-terminal SH3-like domain. The region spanning Glu70–Ser783 is the Myosin motor domain. An ATP-binding site is contributed by Gly164–Thr171. The interval Phe443 to Glu523 is actin-binding. Residues Lys619–Arg641 form a disordered region. IQ domains lie at Met786–Lys808, Ile809–Met833, Lys834–Asn856, Val857–His881, Glu882–Asn904, and Thr905–Ser934. A coiled-coil region spans residues Lys944–Leu1088. The interval Gly1089–His1568 is non alpha-helical, tail domain. The region spanning Ala1223–Lys1498 is the Dilute domain.

It belongs to the TRAFAC class myosin-kinesin ATPase superfamily. Myosin family. In terms of assembly, homodimer. Interacts with calmodulin (CMD1) and the myosin light chain MLC1 through its IQ repeats.

Functionally, myosin heavy chain that is required for the cell cycle-regulated transport of various organelles and proteins for their segregation. Functions by binding with its tail domain to receptor proteins on organelles and exerting force with its N-terminal motor domain against actin filaments, thereby transporting its cargo along polarized actin cables. The chain is Myosin-2 (MYO2) from Saccharomyces uvarum (strain ATCC 76518 / CBS 7001 / CLIB 283 / NBRC 10550 / MCYC 623 / NCYC 2669 / NRRL Y-11845) (Yeast).